The primary structure comprises 717 residues: DNA ligase (717 aa).

NAD(+) contacts are provided by residues 44–48, 93–94, and E127; these read DAEYD and SL. The active-site N6-AMP-lysine intermediate is the K129. 4 residues coordinate NAD(+): R150, E186, K302, and K326. Zn(2+) contacts are provided by C431, C434, C455, and C461. Residues 639–717 enclose the BRCT domain; it reads TSGSPVVGKT…EDEWLELIGG (79 aa).

Belongs to the NAD-dependent DNA ligase family. LigA subfamily. Mg(2+) serves as cofactor. It depends on Mn(2+) as a cofactor.

It catalyses the reaction NAD(+) + (deoxyribonucleotide)n-3'-hydroxyl + 5'-phospho-(deoxyribonucleotide)m = (deoxyribonucleotide)n+m + AMP + beta-nicotinamide D-nucleotide.. In terms of biological role, DNA ligase that catalyzes the formation of phosphodiester linkages between 5'-phosphoryl and 3'-hydroxyl groups in double-stranded DNA using NAD as a coenzyme and as the energy source for the reaction. It is essential for DNA replication and repair of damaged DNA. This is DNA ligase from Rhizobium rhizogenes (strain K84 / ATCC BAA-868) (Agrobacterium radiobacter).